Here is a 473-residue protein sequence, read N- to C-terminus: Photosystem II CP43 reaction center protein (473 aa).

Residues 1 to 14 constitute a propeptide that is removed on maturation; the sequence is MKTLYSPRRYYPVE. Residue threonine 15 is modified to N-acetylthreonine. Phosphothreonine is present on threonine 15. A run of 5 helical transmembrane segments spans residues 69-93, 134-155, 178-200, 255-275, and 291-312; these read LFEV…PHLA, IIGP…KDKN, KAVW…RVIT, KPFA…LSYS, and WFNN…ASQA. A [CaMn4O5] cluster-binding site is contributed by glutamate 367. Residues 447–471 traverse the membrane as a helical segment; the sequence is RARAAAAGFEKGIERETEPVLFMSP.

Belongs to the PsbB/PsbC family. PsbC subfamily. In terms of assembly, PSII is composed of 1 copy each of membrane proteins PsbA, PsbB, PsbC, PsbD, PsbE, PsbF, PsbH, PsbI, PsbJ, PsbK, PsbL, PsbM, PsbT, PsbX, PsbY, PsbZ, Psb30/Ycf12, at least 3 peripheral proteins of the oxygen-evolving complex and a large number of cofactors. It forms dimeric complexes. Binds multiple chlorophylls and provides some of the ligands for the Ca-4Mn-5O cluster of the oxygen-evolving complex. It may also provide a ligand for a Cl- that is required for oxygen evolution. PSII binds additional chlorophylls, carotenoids and specific lipids. is required as a cofactor.

The protein resides in the plastid. It is found in the chloroplast thylakoid membrane. Functionally, one of the components of the core complex of photosystem II (PSII). It binds chlorophyll and helps catalyze the primary light-induced photochemical processes of PSII. PSII is a light-driven water:plastoquinone oxidoreductase, using light energy to abstract electrons from H(2)O, generating O(2) and a proton gradient subsequently used for ATP formation. In Chaetosphaeridium globosum (Charophycean green alga), this protein is Photosystem II CP43 reaction center protein.